We begin with the raw amino-acid sequence, 394 residues long: p-hydroxybenzoate hydroxylase (394 aa).

Residues Ser-13, Glu-32, 42 to 47 (RIRAGV), and Gln-102 each bind FAD. Substrate-binding positions include Tyr-201, 212–214 (SQR), and Tyr-222. Residue Asp-286 participates in FAD binding. Pro-293 serves as a coordination point for substrate. 299 to 300 (LN) serves as a coordination point for FAD.

This sequence belongs to the aromatic-ring hydroxylase family. In terms of assembly, homodimer. It depends on FAD as a cofactor.

It catalyses the reaction 4-hydroxybenzoate + NADPH + O2 + H(+) = 3,4-dihydroxybenzoate + NADP(+) + H2O. It participates in aromatic compound metabolism; benzoate degradation via hydroxylation; 3,4-dihydroxybenzoate from benzoate: step 2/2. Functionally, catalyzes the incorporation of an atom of dioxygen into p-hydroxybenzoate (p-OHB) to form 3,4-dihydroxybenzoate (3,4DOHB). The reaction occurs in two parts: reduction of the flavin adenine dinucleotide (FAD) in the enzyme by reduced nicotinamide adenine dinucleotide phosphate (NADPH) in response to binding p-hydroxybenzoate to the enzyme and oxidation of reduced FAD with oxygen to form a hydroperoxide, which then oxygenates p-hydroxybenzoate. The chain is p-hydroxybenzoate hydroxylase from Pseudomonas aeruginosa (strain ATCC 15692 / DSM 22644 / CIP 104116 / JCM 14847 / LMG 12228 / 1C / PRS 101 / PAO1).